Here is a 252-residue protein sequence, read N- to C-terminus: Phosphate import ATP-binding protein PstB (252 aa).

One can recognise an ABC transporter domain in the interval 6–247 (IEVKNLNTYF…PKNKQTENYI (242 aa)). 38 to 45 (GPSGCGKS) serves as a coordination point for ATP.

This sequence belongs to the ABC transporter superfamily. Phosphate importer (TC 3.A.1.7) family. The complex is composed of two ATP-binding proteins (PstB), two transmembrane proteins (PstC and PstA) and a solute-binding protein (PstS).

The protein localises to the cell membrane. The enzyme catalyses phosphate(out) + ATP + H2O = ADP + 2 phosphate(in) + H(+). In terms of biological role, part of the ABC transporter complex PstSACB involved in phosphate import. Responsible for energy coupling to the transport system. The polypeptide is Phosphate import ATP-binding protein PstB (Methanosphaera stadtmanae (strain ATCC 43021 / DSM 3091 / JCM 11832 / MCB-3)).